Consider the following 408-residue polypeptide: Imidazolonepropionase (408 aa).

The Fe(3+) site is built by H73 and H75. Zn(2+) is bound by residues H73 and H75. 4-imidazolone-5-propanoate contacts are provided by R82, Y145, and H178. Y145 provides a ligand contact to N-formimidoyl-L-glutamate. Position 243 (H243) interacts with Fe(3+). H243 is a Zn(2+) binding site. Q246 serves as a coordination point for 4-imidazolone-5-propanoate. Fe(3+) is bound at residue D318. D318 provides a ligand contact to Zn(2+). 2 residues coordinate N-formimidoyl-L-glutamate: N320 and G322. S323 lines the 4-imidazolone-5-propanoate pocket.

It belongs to the metallo-dependent hydrolases superfamily. HutI family. It depends on Zn(2+) as a cofactor. Requires Fe(3+) as cofactor.

The protein resides in the cytoplasm. The enzyme catalyses 4-imidazolone-5-propanoate + H2O = N-formimidoyl-L-glutamate. It functions in the pathway amino-acid degradation; L-histidine degradation into L-glutamate; N-formimidoyl-L-glutamate from L-histidine: step 3/3. Functionally, catalyzes the hydrolytic cleavage of the carbon-nitrogen bond in imidazolone-5-propanoate to yield N-formimidoyl-L-glutamate. It is the third step in the universal histidine degradation pathway. The sequence is that of Imidazolonepropionase from Shewanella baltica (strain OS155 / ATCC BAA-1091).